The chain runs to 148 residues: Male-specific protein scotti (148 aa).

A disordered region spans residues 56–78 (PQEPPLGVFPAQGGPNGPPRLRK). A glycan (N-linked (GlcNAc...) asparagine) is linked at Asn-129.

This sequence belongs to the male-specific scotti family.

Its function is as follows. Post-meiotically transcribed gene that has a role in late spermiogenesis; required for actin cone progression during spermatid individualization. This is Male-specific protein scotti from Drosophila sechellia (Fruit fly).